Consider the following 189-residue polypeptide: ECF RNA polymerase sigma-E factor (189 aa).

The interval 1-153 is binds RNAP core; that stretch reads MAEQLTDQAL…TAITLRELEG (153 aa). Residues 25–92 form a sigma-70 factor domain-2 region; the sequence is LVSRYQNKVA…KNYLTAQGRR (68 aa). Positions 48–61 match the Polymerase core binding motif; it reads DVVQESFIKAYRSI. Positions 129–180 are sigma-70 factor domain-4; the sequence is RIVFDTIHNLPEDLKTAITLRELEGLSYEDIAEIMDCPVGTVRSRIFRAREM. Residues 156-175 constitute a DNA-binding region (H-T-H motif); the sequence is YEDIAEIMDCPVGTVRSRIF.

The protein belongs to the sigma-70 factor family. ECF subfamily. Interacts transiently with the RNAP catalytic core formed by RpoA, RpoB, RpoC and RpoZ (2 alpha, 1 beta, 1 beta' and 1 omega subunit) to form the RNAP holoenzyme that can initiate transcription. Interacts 1:1 with anti-sigma-E factor RseA which prevents binding to RNAP catalytic core.

Its subcellular location is the cytoplasm. With respect to regulation, ECF sigma-E is held in an inactive form by its cognate anti-sigma factor (RseA) until released by regulated intramembrane proteolysis (RIP). RIP occurs when an extracytoplasmic signal (periplasmic stress and excess LPS) triggers a concerted proteolytic cascade to transmit information and elicit cellular responses. The anti-sigma factor RseA is an inner membrane protein, binding sigma-E in the cytoplasm and RseB in the periplasm. RseA is first cut extracytoplasmically (site-1 protease, S1P, by DegS), then within the membrane itself (site-2 protease, S2P, by RseP), while cytoplasmic proteases (predominantly ClpX-ClpP) finish degrading the regulatory protein, liberating sigma-E. Degradation of RseA requires 2 signals to activate DegS; an outer membrane protein (OMP) signal activates DegS, while an LPS signal causes release of RseB from RseA, freeing RseA to be cleaved. Sigma factors are initiation factors that promote the attachment of RNA polymerase (RNAP) to specific initiation sites and are then released. Extracytoplasmic function (ECF) sigma-E controls the envelope stress response, responding to periplasmic protein stress, increased levels of periplasmic lipopolysaccharide (LPS) as well as heat shock and oxidative stress; it controls protein processing in the extracytoplasmic compartment. The polypeptide is ECF RNA polymerase sigma-E factor (rpoE) (Haemophilus influenzae (strain ATCC 51907 / DSM 11121 / KW20 / Rd)).